The following is a 177-amino-acid chain: Bifunctional protein PyrR (177 aa).

The PRPP-binding signature appears at 99-111; the sequence is VVLVDDVLYTGRT.

This sequence belongs to the purine/pyrimidine phosphoribosyltransferase family. PyrR subfamily. Homodimer and homohexamer; in equilibrium.

The enzyme catalyses UMP + diphosphate = 5-phospho-alpha-D-ribose 1-diphosphate + uracil. Regulates transcriptional attenuation of the pyrimidine nucleotide (pyr) operon by binding in a uridine-dependent manner to specific sites on pyr mRNA. This disrupts an antiterminator hairpin in the RNA and favors formation of a downstream transcription terminator, leading to a reduced expression of downstream genes. Its function is as follows. Also displays a weak uracil phosphoribosyltransferase activity which is not physiologically significant. The chain is Bifunctional protein PyrR from Clostridioides difficile (strain 630) (Peptoclostridium difficile).